The following is a 351-amino-acid chain: Phosphoribosylformylglycinamidine cyclo-ligase (351 aa).

The protein belongs to the AIR synthase family.

The protein localises to the cytoplasm. It catalyses the reaction 2-formamido-N(1)-(5-O-phospho-beta-D-ribosyl)acetamidine + ATP = 5-amino-1-(5-phospho-beta-D-ribosyl)imidazole + ADP + phosphate + H(+). It participates in purine metabolism; IMP biosynthesis via de novo pathway; 5-amino-1-(5-phospho-D-ribosyl)imidazole from N(2)-formyl-N(1)-(5-phospho-D-ribosyl)glycinamide: step 2/2. The protein is Phosphoribosylformylglycinamidine cyclo-ligase of Burkholderia cenocepacia (strain ATCC BAA-245 / DSM 16553 / LMG 16656 / NCTC 13227 / J2315 / CF5610) (Burkholderia cepacia (strain J2315)).